The following is a 209-amino-acid chain: Glutathione S-transferase 1, isoform D (209 aa).

The region spanning 1-80 (MDFYYLPGSA…YLAEKYGKDD (80 aa)) is the GST N-terminal domain. Glutathione contacts are provided by residues serine 9, 50-52 (HCI), and 64-66 (ESR). The 122-residue stretch at 86-207 (DPQKRAVVNQ…AGADEFKAKF (122 aa)) folds into the GST C-terminal domain.

Belongs to the GST superfamily. Theta family. Homodimer.

The enzyme catalyses RX + glutathione = an S-substituted glutathione + a halide anion + H(+). It carries out the reaction 1,1,1-trichloro-2,2-bis(4-chlorophenyl)ethane = 1,1-dichloro-2,2-bis(4-chlorophenyl)ethylene + chloride + H(+). Inhibited by S-hexylglutathione. Conjugation of reduced glutathione to a wide number of exogenous and endogenous hydrophobic electrophiles. Has DDT dehydrochlorinase activity. This chain is Glutathione S-transferase 1, isoform D (GstD1), found in Anopheles gambiae (African malaria mosquito).